The following is a 275-amino-acid chain: Dihydropteroate synthase (275 aa).

The region spanning 15–267 (PQIMGILNFT…DVAATSDMLK (253 aa)) is the Pterin-binding domain. Residue Asn-22 participates in Mg(2+) binding. Residues Thr-62, Asp-96, Asn-115, Asp-185, Lys-221, and 255–257 (RVH) each bind (7,8-dihydropterin-6-yl)methyl diphosphate.

It belongs to the DHPS family. In terms of assembly, homodimer. Mg(2+) serves as cofactor.

The enzyme catalyses (7,8-dihydropterin-6-yl)methyl diphosphate + 4-aminobenzoate = 7,8-dihydropteroate + diphosphate. It functions in the pathway cofactor biosynthesis; tetrahydrofolate biosynthesis; 7,8-dihydrofolate from 2-amino-4-hydroxy-6-hydroxymethyl-7,8-dihydropteridine diphosphate and 4-aminobenzoate: step 1/2. Functionally, catalyzes the condensation of para-aminobenzoate (pABA) with 6-hydroxymethyl-7,8-dihydropterin diphosphate (DHPt-PP) to form 7,8-dihydropteroate (H2Pte), the immediate precursor of folate derivatives. This is Dihydropteroate synthase (folP-A) from Haemophilus influenzae (strain ATCC 51907 / DSM 11121 / KW20 / Rd).